Reading from the N-terminus, the 304-residue chain is Acetaldehyde dehydrogenase 1 (304 aa).

Cys131 functions as the Acyl-thioester intermediate in the catalytic mechanism. NAD(+)-binding positions include Ser162–Asn170 and Asn273.

Belongs to the acetaldehyde dehydrogenase family.

The catalysed reaction is acetaldehyde + NAD(+) + CoA = acetyl-CoA + NADH + H(+). The protein is Acetaldehyde dehydrogenase 1 of Dechloromonas aromatica (strain RCB).